A 237-amino-acid chain; its full sequence is Ribonuclease PH (237 aa).

Phosphate is bound by residues arginine 86 and 124–126; that span reads GTR.

It belongs to the RNase PH family. Homohexameric ring arranged as a trimer of dimers.

The catalysed reaction is tRNA(n+1) + phosphate = tRNA(n) + a ribonucleoside 5'-diphosphate. Phosphorolytic 3'-5' exoribonuclease that plays an important role in tRNA 3'-end maturation. Removes nucleotide residues following the 3'-CCA terminus of tRNAs; can also add nucleotides to the ends of RNA molecules by using nucleoside diphosphates as substrates, but this may not be physiologically important. Probably plays a role in initiation of 16S rRNA degradation (leading to ribosome degradation) during starvation. This is Ribonuclease PH from Methylobacterium nodulans (strain LMG 21967 / CNCM I-2342 / ORS 2060).